Consider the following 163-residue polypeptide: 6,7-dimethyl-8-ribityllumazine synthase (163 aa).

5-amino-6-(D-ribitylamino)uracil contacts are provided by residues phenylalanine 27, 58–60, and 87–89; these read ALE and CVI. Residue 92–93 participates in (2S)-2-hydroxy-3-oxobutyl phosphate binding; that stretch reads DT. The Proton donor role is filled by histidine 95. Asparagine 120 is a 5-amino-6-(D-ribitylamino)uracil binding site. Arginine 134 contacts (2S)-2-hydroxy-3-oxobutyl phosphate.

It belongs to the DMRL synthase family.

It carries out the reaction (2S)-2-hydroxy-3-oxobutyl phosphate + 5-amino-6-(D-ribitylamino)uracil = 6,7-dimethyl-8-(1-D-ribityl)lumazine + phosphate + 2 H2O + H(+). It functions in the pathway cofactor biosynthesis; riboflavin biosynthesis; riboflavin from 2-hydroxy-3-oxobutyl phosphate and 5-amino-6-(D-ribitylamino)uracil: step 1/2. Functionally, catalyzes the formation of 6,7-dimethyl-8-ribityllumazine by condensation of 5-amino-6-(D-ribitylamino)uracil with 3,4-dihydroxy-2-butanone 4-phosphate. This is the penultimate step in the biosynthesis of riboflavin. The sequence is that of 6,7-dimethyl-8-ribityllumazine synthase from Afipia carboxidovorans (strain ATCC 49405 / DSM 1227 / KCTC 32145 / OM5) (Oligotropha carboxidovorans).